A 684-amino-acid chain; its full sequence is DNA gyrase subunit B, novobiocin-sensitive (684 aa).

Residues 1–22 are disordered; it reads MADSGNPNENTPSVATGENGEV. Residues 154-302 form a novobiocin-binding region; that stretch reads VKTDGYRWTQ…RMLSVEIAMQ (149 aa). Residues 463-577 enclose the Toprim domain; the sequence is CEIFIVEGDS…AGHVYLSRPP (115 aa). Residues Glu-469, Asp-542, and Asp-544 each coordinate Mg(2+).

Belongs to the type II topoisomerase GyrB family. In terms of assembly, heterotetramer, composed of two GyrA and two GyrB chains. In the heterotetramer, GyrA contains the active site tyrosine that forms a transient covalent intermediate with DNA, while GyrB binds cofactors and catalyzes ATP hydrolysis. It depends on Mg(2+) as a cofactor. The cofactor is Mn(2+). Ca(2+) is required as a cofactor.

The protein localises to the cytoplasm. The catalysed reaction is ATP-dependent breakage, passage and rejoining of double-stranded DNA.. In terms of biological role, a type II topoisomerase that negatively supercoils closed circular double-stranded (ds) DNA in an ATP-dependent manner to modulate DNA topology and maintain chromosomes in an underwound state. Negative supercoiling favors strand separation, and DNA replication, transcription, recombination and repair, all of which involve strand separation. Also able to catalyze the interconversion of other topological isomers of dsDNA rings, including catenanes and knotted rings. Type II topoisomerases break and join 2 DNA strands simultaneously in an ATP-dependent manner. The polypeptide is DNA gyrase subunit B, novobiocin-sensitive (Streptomyces niveus (Streptomyces spheroides)).